A 761-amino-acid chain; its full sequence is Signal transducer and transcription activator (761 aa).

Residues 594 to 658 (WKAGCIMGFI…APWTARDFQV (65 aa)) form the SH2 domain. A Phosphotyrosine; by JAK modification is found at Y711.

Belongs to the transcription factor STAT family. As to quaternary structure, forms a homodimer or a heterodimer with a related family member. In terms of processing, tyrosine phosphorylated by hopscotch. Phosphorylation is required for DNA-binding activity and dimerization.

It localises to the cytoplasm. The protein resides in the nucleus. Might play a role in signal transduction and activation of transcription. Plays an important role in the segmental pattern formation in the early embryo by activating specific stripes of pair rule gene expression in early development as part of the Janus kinase-STAT pathway. Might play a role in male germline stem cell maintenance. The polypeptide is Signal transducer and transcription activator (Stat92E) (Drosophila melanogaster (Fruit fly)).